We begin with the raw amino-acid sequence, 365 residues long: uncharacterized protein (365 aa).

A run of 6 helical transmembrane segments spans residues 3 to 23 (MDTS…LYSI), 60 to 80 (IGII…LNII), 100 to 120 (VFLF…LIAI), 141 to 161 (SGIL…GDEF), 171 to 191 (AIAS…IPLL), and 280 to 300 (TALF…LALF).

To S.solfataricus C04034.

Its subcellular location is the cell membrane. This is an uncharacterized protein from Methanocaldococcus jannaschii (strain ATCC 43067 / DSM 2661 / JAL-1 / JCM 10045 / NBRC 100440) (Methanococcus jannaschii).